A 454-amino-acid chain; its full sequence is Neuronal acetylcholine receptor subunit alpha-5 (454 aa).

The disordered stretch occupies residues 1–26 (MPLRARSRKPGAGPAARAPQAGVSEP). The signal sequence occupies residues 1-29 (MPLRARSRKPGAGPAARAPQAGVSEPSFV). The span at 10–22 (PGAGPAARAPQAG) shows a compositional bias: low complexity. The Extracellular portion of the chain corresponds to 30-240 (AKSEDRLFKH…IIRRLPLFYT (211 aa)). N-linked (GlcNAc...) asparagine glycans are attached at residues Asn55, Asn169, and Asn215. An intrachain disulfide couples Cys156 to Cys170. Cys220 and Cys221 form a disulfide bridge. 3 consecutive transmembrane segments (helical) span residues 241–261 (LFLIIPCIGLSFLTVLVFYLP), 270–290 (LCTSVLVSLTVFLLVIEEIIP), and 303–323 (LVFTMIFVTLSIVITVFAINI). Topologically, residues 324 to 416 (HHRSSSTHNA…KFIAQVLDRM (93 aa)) are cytoplasmic. The chain crosses the membrane as a helical span at residues 417–437 (FLWAFLLVSIIGSLVLFIPVI). Over 438-454 (HKWASIIVPVHIGSTNT) the chain is Extracellular.

Belongs to the ligand-gated ion channel (TC 1.A.9) family. Acetylcholine receptor (TC 1.A.9.1) subfamily. Alpha-5/CHRNA5 sub-subfamily. Neuronal AChR that forms heteropentamers composed of two different type of subunits: alpha and non-alpha (beta). CHRNA5/alpha-5 subunit is only able to form functional nAChRs when co-assembled with another alpha subunit, can be combined to CHRNA4/alpha-4 or CHRNA3/alpha-3 and CHRNB4/beta-4 or CHRNB2/beta-2 to give rise to functional receptors. Interacts with LYPD6.

It is found in the synaptic cell membrane. Its subcellular location is the cell membrane. It carries out the reaction Ca(2+)(in) = Ca(2+)(out). It catalyses the reaction K(+)(in) = K(+)(out). The enzyme catalyses Na(+)(in) = Na(+)(out). Activated by a myriad of ligands such as acetylcholine, cytisine, nicotine, choline and epibatidine. Functionally, component of neuronal acetylcholine receptors (nAChRs) that function as pentameric, ligand-gated cation channels with high calcium permeability among other activities. nAChRs are excitatory neurotrasnmitter receptors formed by a collection of nAChR subunits known to mediate synaptic transmission in the nervous system and the neuromuscular junction. Each nAchR subunit confers differential attributes to channel properties, including activation, deactivation and desensitization kinetics, pH sensitivity, cation permeability, and binding to allosteric modulators. Has an accessory rather than functional role and is only able to form functional nAChRs when co-assembled with another beta subunit. Participates in pentameric assemblies along with CHRNA3, CHRNA4, CHRNB2 and CHRNB4. Increases receptor sensitivity to acetylcholine and nicotine when associated with CHRNA4 and CHRNB2. Plays a role in nicotine addiction. The sequence is that of Neuronal acetylcholine receptor subunit alpha-5 (CHRNA5) from Gallus gallus (Chicken).